The primary structure comprises 129 residues: 3-aminoacrylate deaminase RutC (129 aa).

It belongs to the RutC family.

The catalysed reaction is (Z)-3-aminoacrylate + H2O + H(+) = 3-oxopropanoate + NH4(+). Functionally, involved in pyrimidine catabolism. Catalyzes the deamination of 3-aminoacrylate to malonic semialdehyde, a reaction that can also occur spontaneously. RutC may facilitate the reaction and modulate the metabolic fitness, rather than catalyzing essential functions. The polypeptide is 3-aminoacrylate deaminase RutC (Rhizobium rhizogenes (strain K84 / ATCC BAA-868) (Agrobacterium radiobacter)).